We begin with the raw amino-acid sequence, 381 residues long: 2-epi-5-epi-valiolone synthase (381 aa).

Residues Asp50, 81-84 (EEAK), 114-118 (GIVLD), 138-139 (TS), Lys151, Lys160, and 178-181 (FLDT) contribute to the NAD(+) site. Lys151 is an active-site residue. A divalent metal cation is bound by residues Glu193, His264, and His280.

This sequence belongs to the sugar phosphate cyclases superfamily. EEVS family. NAD(+) is required as a cofactor. It depends on Co(2+) as a cofactor.

It catalyses the reaction D-sedoheptulose 7-phosphate = 2-epi-5-epi-valiolone + phosphate. Its pathway is antibiotic biosynthesis. Functionally, catalyzes the cyclization of D-sedoheptulose 7-phosphate to 2-epi-5-epi-valiolone. Involved in cetoniacytone A biosynthesis. This is 2-epi-5-epi-valiolone synthase from Actinomyces sp.